We begin with the raw amino-acid sequence, 293 residues long: Pyridoxal 5'-phosphate synthase subunit PdxS (293 aa).

Residue aspartate 23 coordinates D-ribose 5-phosphate. The Schiff-base intermediate with D-ribose 5-phosphate role is filled by lysine 80. Residue glycine 152 coordinates D-ribose 5-phosphate. Arginine 164 serves as a coordination point for D-glyceraldehyde 3-phosphate. D-ribose 5-phosphate contacts are provided by residues glycine 213 and 234–235 (GS).

Belongs to the PdxS/SNZ family. In the presence of PdxT, forms a dodecamer of heterodimers.

It carries out the reaction aldehydo-D-ribose 5-phosphate + D-glyceraldehyde 3-phosphate + L-glutamine = pyridoxal 5'-phosphate + L-glutamate + phosphate + 3 H2O + H(+). Its pathway is cofactor biosynthesis; pyridoxal 5'-phosphate biosynthesis. Catalyzes the formation of pyridoxal 5'-phosphate from ribose 5-phosphate (RBP), glyceraldehyde 3-phosphate (G3P) and ammonia. The ammonia is provided by the PdxT subunit. Can also use ribulose 5-phosphate and dihydroxyacetone phosphate as substrates, resulting from enzyme-catalyzed isomerization of RBP and G3P, respectively. In Niallia circulans (Bacillus circulans), this protein is Pyridoxal 5'-phosphate synthase subunit PdxS.